Consider the following 366-residue polypeptide: Putative amino-acid transporter MJ1196 (366 aa).

11 helical membrane passes run 14–34 (ITSI…LLFG), 37–57 (IIWG…PFAY), 87–107 (ILWL…EIVF), 111–131 (FNVS…ILGG), 141–161 (IFGI…GIKI), 173–193 (ILTI…TMPL), 205–225 (GLLV…LTIV), 247–267 (FLLA…LFTL), 291–311 (IPYY…IFDA), 314–334 (LVDM…LAVF), and 346–366 (LISM…FIIL).

This sequence belongs to the amino acid-polyamine-organocation (APC) superfamily.

Its subcellular location is the cell membrane. The protein is Putative amino-acid transporter MJ1196 of Methanocaldococcus jannaschii (strain ATCC 43067 / DSM 2661 / JAL-1 / JCM 10045 / NBRC 100440) (Methanococcus jannaschii).